A 220-amino-acid chain; its full sequence is WAP four-disulfide core domain protein 1 (220 aa).

A signal peptide spans 1–31; it reads MPLTGVGPGSCRRQIIRALCLLLLLLHAGSA. Residues 46–70 are disordered; that stretch reads KSRAEEAGAPGGPRQPRADRCPPPP. In terms of domain architecture, WAP spans 59 to 108; the sequence is RQPRADRCPPPPRTLPPGACQAARCQADSECPRHRRCCYNGCAYACLEAV. Cystine bridges form between Cys-66/Cys-96, Cys-78/Cys-100, Cys-83/Cys-95, and Cys-89/Cys-104. The interval 199 to 220 is disordered; sequence EYPEGDSKNVAEPGRGQQKHFQ.

It is found in the secreted. In terms of biological role, has growth inhibitory activity. In Homo sapiens (Human), this protein is WAP four-disulfide core domain protein 1 (WFDC1).